A 648-amino-acid chain; its full sequence is Pumilio homolog 3 (648 aa).

Positions M1–R124 are disordered. The span at A17–S27 shows a compositional bias: basic and acidic residues. An N6-acetyllysine modification is found at K33. Residues L60–K69 are compositionally biased toward basic residues. Residues F94–R124 are compositionally biased toward basic and acidic residues. The Nuclear localization signal motif lies at K106–K118. The region spanning E143–L510 is the PUM-HD domain. Pumilio repeat units lie at residues H177 to A212, K213 to H248, A249 to G277, R289 to H325, S326 to T361, H362 to G397, Q398 to D435, K436 to D504, K505 to H551, P552 to V596, and N597 to S636. The interval R289 to V297 is HA-8.

Interacts with PARP1 (via catalytic domain). Widely expressed.

The protein resides in the nucleus. It localises to the nucleolus. Its subcellular location is the nucleoplasm. It is found in the chromosome. In terms of biological role, inhibits the poly(ADP-ribosyl)ation activity of PARP1 and the degradation of PARP1 by CASP3 following genotoxic stress. Binds to double-stranded RNA or DNA without sequence specificity. Involved in development of the eye and of primordial germ cells. The polypeptide is Pumilio homolog 3 (Homo sapiens (Human)).